The sequence spans 47 residues: Delta-ctenitoxin-Pr2d (47 aa).

Cystine bridges form between Cys-3/Cys-17, Cys-10/Cys-23, Cys-14/Cys-46, Cys-16/Cys-31, and Cys-25/Cys-29.

Expressed by the venom gland.

It localises to the secreted. Blocks voltage-gated sodium channels (Nav). Causes rapid general spastic paralysis and death when injected in mice at dose levels of less than 2 ug per mouse. The chain is Delta-ctenitoxin-Pr2d from Phoneutria reidyi (Brazilian Amazonian armed spider).